Consider the following 75-residue polypeptide: uncharacterized protein (75 aa).

A helical membrane pass occupies residues 49-69 (VDIVAVATTLPFIVAVICIVF).

Its subcellular location is the host membrane. This is an uncharacterized protein from Saccharolobus islandicus (Sulfolobus islandicus).